The following is a 123-amino-acid chain: Late histone H2B.L1 (123 aa).

A compositionally biased stretch (low complexity) spans 1-10 (MPAKAQPAGK). Residues 1 to 33 (MPAKAQPAGKKGSKKAKAPRPSGGKKRRRRRKE) are disordered. Residues 11–32 (KGSKKAKAPRPSGGKKRRRRRK) show a composition bias toward basic residues. A glycan (O-linked (GlcNAc) serine) is linked at Ser110. Lys118 participates in a covalent cross-link: Glycyl lysine isopeptide (Lys-Gly) (interchain with G-Cter in ubiquitin).

Belongs to the histone H2B family. The nucleosome is a histone octamer containing two molecules each of H2A, H2B, H3 and H4 assembled in one H3-H4 heterotetramer and two H2A-H2B heterodimers. The octamer wraps approximately 147 bp of DNA. Monoubiquitination of Lys-118 gives a specific tag for epigenetic transcriptional activation and is also prerequisite for histone H3 'Lys-4' and 'Lys-79' methylation. In terms of processing, glcNAcylation at Ser-110 promotes monoubiquitination of Lys-118. It fluctuates in response to extracellular glucose, and associates with transcribed genes.

It localises to the nucleus. Its subcellular location is the chromosome. Its function is as follows. Core component of nucleosome. Nucleosomes wrap and compact DNA into chromatin, limiting DNA accessibility to the cellular machineries which require DNA as a template. Histones thereby play a central role in transcription regulation, DNA repair, DNA replication and chromosomal stability. DNA accessibility is regulated via a complex set of post-translational modifications of histones, also called histone code, and nucleosome remodeling. The polypeptide is Late histone H2B.L1 (Strongylocentrotus purpuratus (Purple sea urchin)).